The chain runs to 576 residues: POU domain, class 6, transcription factor 1 (576 aa).

A disordered region spans residues 65-88 (PAEAGSCDPDHSAEATVAARSPSE). The POU-specific domain maps to 414–488 (EDGINLEEIR…VLEKWLMEAE (75 aa)). Residues 509–568 (KRKRRTSFTPQAIEALNAYFEKNPLPTGQEITEIAKELNYDREVVRVWFCNRRQTLKNTS) constitute a DNA-binding region (homeobox).

It belongs to the POU transcription factor family. Class-6 subfamily. In terms of tissue distribution, isoform C1 and isoform C2 are found in the brain, while isoform C7 is found in the testis.

Its subcellular location is the nucleus. In terms of biological role, transcription factor that binds preferentially to a variant of the octamer motif (5'-ATGATAAT-3'). This is POU domain, class 6, transcription factor 1 (Pou6f1) from Mus musculus (Mouse).